The primary structure comprises 357 residues: Chorismate synthase (357 aa).

R47 is a binding site for NADP(+). Residues 123-125 (RSS), G281, 296-300 (KPTSS), and R324 each bind FMN.

It belongs to the chorismate synthase family. As to quaternary structure, homotetramer. FMNH2 serves as cofactor.

The catalysed reaction is 5-O-(1-carboxyvinyl)-3-phosphoshikimate = chorismate + phosphate. Its pathway is metabolic intermediate biosynthesis; chorismate biosynthesis; chorismate from D-erythrose 4-phosphate and phosphoenolpyruvate: step 7/7. Its function is as follows. Catalyzes the anti-1,4-elimination of the C-3 phosphate and the C-6 proR hydrogen from 5-enolpyruvylshikimate-3-phosphate (EPSP) to yield chorismate, which is the branch point compound that serves as the starting substrate for the three terminal pathways of aromatic amino acid biosynthesis. This reaction introduces a second double bond into the aromatic ring system. The polypeptide is Chorismate synthase (Chlamydia muridarum (strain MoPn / Nigg)).